The chain runs to 145 residues: D-aminoacyl-tRNA deacylase (145 aa).

The Gly-cisPro motif, important for rejection of L-amino acids motif lies at Gly137–Pro138.

It belongs to the DTD family. As to quaternary structure, homodimer.

Its subcellular location is the cytoplasm. The catalysed reaction is glycyl-tRNA(Ala) + H2O = tRNA(Ala) + glycine + H(+). It catalyses the reaction a D-aminoacyl-tRNA + H2O = a tRNA + a D-alpha-amino acid + H(+). Its function is as follows. An aminoacyl-tRNA editing enzyme that deacylates mischarged D-aminoacyl-tRNAs. Also deacylates mischarged glycyl-tRNA(Ala), protecting cells against glycine mischarging by AlaRS. Acts via tRNA-based rather than protein-based catalysis; rejects L-amino acids rather than detecting D-amino acids in the active site. By recycling D-aminoacyl-tRNA to D-amino acids and free tRNA molecules, this enzyme counteracts the toxicity associated with the formation of D-aminoacyl-tRNA entities in vivo and helps enforce protein L-homochirality. This is D-aminoacyl-tRNA deacylase from Francisella tularensis subsp. holarctica (strain FTNF002-00 / FTA).